The sequence spans 169 residues: Cilia- and flagella-associated protein HOATZ (169 aa).

3 disordered regions span residues 1–21 (METGPSEEPSGRKESQEMCPP), 52–89 (SQLVLRRDSSQRLPVARPRRSRGSENSHSSQSFHLASN), and 144–169 (KAKEHKAKKVVSESDKEDQEEVKTLD). The span at 75–89 (SENSHSSQSFHLASN) shows a compositional bias: polar residues.

The protein belongs to the HOATZ family.

Its subcellular location is the cytoplasm. It localises to the cell projection. The protein localises to the cilium. Its function is as follows. Required for motile ciliogenesis and flagellar genesis by mediating the maturation of the glycolytic enzyme ENO4. In Homo sapiens (Human), this protein is Cilia- and flagella-associated protein HOATZ.